The primary structure comprises 305 residues: Probable cell division protein WhiA (305 aa).

Positions 272–305 (SIQQLADSLTVPITKSGVNHRLRKINKIADELTD) form a DNA-binding region, H-T-H motif.

Belongs to the WhiA family.

Its function is as follows. Involved in cell division and chromosome segregation. In Streptococcus suis (strain 98HAH33), this protein is Probable cell division protein WhiA.